We begin with the raw amino-acid sequence, 66 residues long: Large ribosomal subunit protein bL35 (66 aa).

The span at 1 to 16 (MPKMKTHKGSAKRFKK) shows a compositional bias: basic residues. A disordered region spans residues 1-24 (MPKMKTHKGSAKRFKKTGTGQLKR).

It belongs to the bacterial ribosomal protein bL35 family.

The chain is Large ribosomal subunit protein bL35 from Anoxybacillus flavithermus (strain DSM 21510 / WK1).